The primary structure comprises 40 residues: U4-ctenitoxin-Co1c (40 aa).

4 disulfide bridges follow: cysteine 3/cysteine 20, cysteine 10/cysteine 26, cysteine 19/cysteine 40, and cysteine 28/cysteine 38.

Expressed by the venom gland.

It is found in the secreted. Its function is as follows. Not toxic to mice by intracerebroventricular injection. The protein is U4-ctenitoxin-Co1c of Ctenus ornatus (Brazilian spider).